A 296-amino-acid polypeptide reads, in one-letter code: Ribonuclease HIII (296 aa).

Residues 80–296 (LALIGSDEVG…NTKKAYQRLK (217 aa)) enclose the RNase H type-2 domain. The a divalent metal cation site is built by D86, E87, and D191.

It belongs to the RNase HII family. RnhC subfamily. Mn(2+) serves as cofactor. Mg(2+) is required as a cofactor.

Its subcellular location is the cytoplasm. The catalysed reaction is Endonucleolytic cleavage to 5'-phosphomonoester.. Functionally, endonuclease that specifically degrades the RNA of RNA-DNA hybrids. The sequence is that of Ribonuclease HIII from Streptococcus thermophilus (strain CNRZ 1066).